A 251-amino-acid polypeptide reads, in one-letter code: Hydroxyacylglutathione hydrolase (251 aa).

Positions 53, 55, 57, 58, 110, 127, and 165 each coordinate Zn(2+).

Belongs to the metallo-beta-lactamase superfamily. Glyoxalase II family. As to quaternary structure, monomer. Zn(2+) serves as cofactor.

The enzyme catalyses an S-(2-hydroxyacyl)glutathione + H2O = a 2-hydroxy carboxylate + glutathione + H(+). It participates in secondary metabolite metabolism; methylglyoxal degradation; (R)-lactate from methylglyoxal: step 2/2. Its function is as follows. Thiolesterase that catalyzes the hydrolysis of S-D-lactoyl-glutathione to form glutathione and D-lactic acid. The protein is Hydroxyacylglutathione hydrolase of Serratia proteamaculans (strain 568).